The chain runs to 134 residues: Salivary protein 15 Iric-1 (134 aa).

A signal peptide spans 1-21 (MESFVAMKVVCITVLFVIVAV). A glycan (N-linked (GlcNAc...) asparagine) is linked at N22. The interval 48-67 (PSYIRNPQKLALELLEICKN) is required for Borrelia OspC-binding. Residues N91 and N103 are each glycosylated (N-linked (GlcNAc...) asparagine). Positions 115–134 (GPNGETCAEKSKCVGHIPGC) are CD4-binding.

It belongs to the salp15 family. In terms of assembly, monomer. Interacts with host CD4. Interacts with host DC-SIGN (CD209). As to quaternary structure, (Microbial infection) Interacts with Borrelia outer surface protein C (OspC). As to expression, expressed in salivary glands. Detected in fed adult female.

Its subcellular location is the secreted. Its function is as follows. Salivary tick protein that downregulates host immune system by binding to both dendritic cells, and CD4(+) T cells. Specifically binds to the CD4 coreceptor on T cells. This interaction prevents the activation of the Src kinase, Lck, and its downstream substrate Zap-70, and results in deficient activation of PLCgamma1, the repression of calcium fluxes triggered by T-cell antigen receptor (TCR) ligation, and a subsequent reduction in interleukin-2 production. This salivary protein also binds to DC-SIGN (CD209) on dendritic cells (DC) and activates the Raf-1 kinase/MEK signaling pathway that results in down-regulating expression of pro-inflammatory cytokines. Furthermore, it inhibits T cell proliferation induced by DCs. In addition, it inhibits in vitro keratinocyte inflammation induced by Borrelia burgdorferi or by the major outer surface protein (OspC) of Borrelia. In addition, it downregulates chemokines and monocyte chemoattractant protein 1, as well as several antimicrobial peptides such as defensins, cathelicidin, psoriasin, and RNase 7. Apart from its immunomodulatory activities, it is also associated with protection of Borrelia spirochetes from antibody-mediated killing through its binding to OspC. In vivo, tests on different immune disease animal models show promising therapeutic results, e.g., in inhibiting HIV infection, experimental autoimmune encephalomyelitis, transplantation rejection, and asthma. Functionally, (Microbial infection) Protects Borrelia garinii (strain VSBP) from host complement-mediated killing by binding to the surface of spirochetes and preventing deposition of host C5b-9 membrane attack complexes. Protects Borrelia garinii (strain A87S) from host complement-mediated killing. (Microbial infection) Partially protects Borrelia burgdorferi (strains VS215 and B31) from host complement-mediated killing. The chain is Salivary protein 15 Iric-1 from Ixodes ricinus (Common tick).